A 300-amino-acid polypeptide reads, in one-letter code: NADH-cytochrome b5 reductase 1 (300 aa).

A helical membrane pass occupies residues 8 to 28 (PLVVFATVATIIISFVTLYFF). Over residues 34–45 (SSTTSSSSSSSS) the composition is skewed to low complexity. Positions 34–54 (SSTTSSSSSSSSKSKKGSPAL) are disordered. Positions 57-160 (DKFQKFPLIS…RGPKGFFTYT (104 aa)) constitute an FAD-binding FR-type domain. FAD is bound by residues 140 to 155 (AEKQ…GPKG) and 166 to 198 (SLGL…KVHL).

This sequence belongs to the flavoprotein pyridine nucleotide cytochrome reductase family. Monomer. Component of the 2-(3-amino-3-carboxypropyl)histidine synthase complex composed of DPH1, DPH2, DPH3 and a NADH-dependent reductase, predominantly CBR1. FAD is required as a cofactor.

Its subcellular location is the mitochondrion outer membrane. The enzyme catalyses 2 Fe(III)-[cytochrome b5] + NADH = 2 Fe(II)-[cytochrome b5] + NAD(+) + H(+). It catalyses the reaction 2 Fe(3+)-[Dph3] + NADH = 2 Fe(2+)-[Dph3] + NAD(+) + H(+). It participates in protein modification; peptidyl-diphthamide biosynthesis. In terms of biological role, NADH-dependent reductase for DPH3 and cytochrome b5. Required for the first step of diphthamide biosynthesis, a post-translational modification of histidine which occurs in elongation factor 2. DPH1 and DPH2 transfer a 3-amino-3-carboxypropyl (ACP) group from S-adenosyl-L-methionine (SAM) to a histidine residue, the reaction is assisted by a reduction system comprising DPH3 and a NADH-dependent reductase, predominantly CBR1. By reducing DPH3, also involved in the formation of the tRNA wobble base modification mcm5s 2U (5-methoxycarbonylmethyl-2-thiouridine), mediated by the elongator complex. The cytochrome b5/NADH cytochrome b5 reductase electron transfer system supports the catalytic activity of several sterol biosynthetic enzymes. The protein is NADH-cytochrome b5 reductase 1 (CBR1) of Lodderomyces elongisporus (strain ATCC 11503 / CBS 2605 / JCM 1781 / NBRC 1676 / NRRL YB-4239) (Yeast).